We begin with the raw amino-acid sequence, 202 residues long: Small ribosomal subunit protein uS5 (202 aa).

The 64-residue stretch at L50–V113 folds into the S5 DRBM domain.

This sequence belongs to the universal ribosomal protein uS5 family. As to quaternary structure, part of the 30S ribosomal subunit. Contacts protein S4.

With S4 and S12 plays an important role in translational accuracy. This Pyrobaculum islandicum (strain DSM 4184 / JCM 9189 / GEO3) protein is Small ribosomal subunit protein uS5.